A 577-amino-acid chain; its full sequence is Arginine--tRNA ligase (577 aa).

The short motif at P122 to H132 is the 'HIGH' region element.

The protein belongs to the class-I aminoacyl-tRNA synthetase family. In terms of assembly, monomer.

Its subcellular location is the cytoplasm. The catalysed reaction is tRNA(Arg) + L-arginine + ATP = L-arginyl-tRNA(Arg) + AMP + diphosphate. In Vibrio parahaemolyticus serotype O3:K6 (strain RIMD 2210633), this protein is Arginine--tRNA ligase.